Reading from the N-terminus, the 311-residue chain is Ribosomal RNA small subunit methyltransferase H (311 aa).

Residues 32-34 (AGH), D52, F79, D100, and Q107 each bind S-adenosyl-L-methionine. Residues 289–298 (SKEELEENNR) are compositionally biased toward basic and acidic residues. A disordered region spans residues 289–311 (SKEELEENNRARSAKLRIAEKRK). The span at 300 to 311 (RSAKLRIAEKRK) shows a compositional bias: basic residues.

It belongs to the methyltransferase superfamily. RsmH family.

The protein resides in the cytoplasm. It carries out the reaction cytidine(1402) in 16S rRNA + S-adenosyl-L-methionine = N(4)-methylcytidine(1402) in 16S rRNA + S-adenosyl-L-homocysteine + H(+). Functionally, specifically methylates the N4 position of cytidine in position 1402 (C1402) of 16S rRNA. In Bacillus velezensis (strain DSM 23117 / BGSC 10A6 / LMG 26770 / FZB42) (Bacillus amyloliquefaciens subsp. plantarum), this protein is Ribosomal RNA small subunit methyltransferase H.